A 450-amino-acid polypeptide reads, in one-letter code: 23S rRNA (uracil(1939)-C(5))-methyltransferase RlmD (450 aa).

Residues 12 to 70 (SKQLSAKLSLSVNQLDHLGAGIAQHQGKVVFIPGALPDETVTVQLTEQKKNYARAKLIK) enclose the TRAM domain. [4Fe-4S] cluster contacts are provided by cysteine 83, cysteine 89, cysteine 92, and cysteine 171. Residues glutamine 283, phenylalanine 312, asparagine 317, glutamate 333, aspartate 360, and aspartate 380 each coordinate S-adenosyl-L-methionine. The active-site Nucleophile is the cysteine 406.

Belongs to the class I-like SAM-binding methyltransferase superfamily. RNA M5U methyltransferase family. RlmD subfamily.

It carries out the reaction uridine(1939) in 23S rRNA + S-adenosyl-L-methionine = 5-methyluridine(1939) in 23S rRNA + S-adenosyl-L-homocysteine + H(+). Functionally, catalyzes the formation of 5-methyl-uridine at position 1939 (m5U1939) in 23S rRNA. The chain is 23S rRNA (uracil(1939)-C(5))-methyltransferase RlmD from Shewanella baltica (strain OS223).